Here is a 106-residue protein sequence, read N- to C-terminus: Pyrimidine/purine nucleoside phosphorylase (106 aa).

It belongs to the nucleoside phosphorylase PpnP family.

It catalyses the reaction a purine D-ribonucleoside + phosphate = a purine nucleobase + alpha-D-ribose 1-phosphate. It carries out the reaction adenosine + phosphate = alpha-D-ribose 1-phosphate + adenine. The enzyme catalyses cytidine + phosphate = cytosine + alpha-D-ribose 1-phosphate. The catalysed reaction is guanosine + phosphate = alpha-D-ribose 1-phosphate + guanine. It catalyses the reaction inosine + phosphate = alpha-D-ribose 1-phosphate + hypoxanthine. It carries out the reaction thymidine + phosphate = 2-deoxy-alpha-D-ribose 1-phosphate + thymine. The enzyme catalyses uridine + phosphate = alpha-D-ribose 1-phosphate + uracil. The catalysed reaction is xanthosine + phosphate = alpha-D-ribose 1-phosphate + xanthine. Functionally, catalyzes the phosphorolysis of diverse nucleosides, yielding D-ribose 1-phosphate and the respective free bases. Can use uridine, adenosine, guanosine, cytidine, thymidine, inosine and xanthosine as substrates. Also catalyzes the reverse reactions. This chain is Pyrimidine/purine nucleoside phosphorylase, found in Burkholderia ambifaria (strain MC40-6).